The following is a 40-amino-acid chain: RapK inhibitor (40 aa).

2 consecutive propeptides follow at residues 1-34 (MKKL…IQVA) and Gly40.

It belongs to the Phr family. Contains a predicted signal peptide cleavage site in the N-terminal region, however the propeptide is probably only subject to processing events at the ends of the mature peptide.

It localises to the secreted. The protein resides in the cytoplasm. In terms of biological role, signaling molecule involved in the regulation of genetic competence development. Secreted during production, but the mature peptide acts intracellularly, indicating that it needs to be imported into the cell to function. Stimulates expression of the genes controlled by ComA, a transcriptional factor that regulates the development of genetic competence. Acts by inhibiting RapK, which regulates the activity of ComA. The protein is RapK inhibitor (phrK) of Bacillus subtilis (strain 168).